The chain runs to 99 residues: Aspartyl/glutamyl-tRNA(Asn/Gln) amidotransferase subunit C (99 aa).

Belongs to the GatC family. Heterotrimer of A, B and C subunits.

The enzyme catalyses L-glutamyl-tRNA(Gln) + L-glutamine + ATP + H2O = L-glutaminyl-tRNA(Gln) + L-glutamate + ADP + phosphate + H(+). It carries out the reaction L-aspartyl-tRNA(Asn) + L-glutamine + ATP + H2O = L-asparaginyl-tRNA(Asn) + L-glutamate + ADP + phosphate + 2 H(+). Its function is as follows. Allows the formation of correctly charged Asn-tRNA(Asn) or Gln-tRNA(Gln) through the transamidation of misacylated Asp-tRNA(Asn) or Glu-tRNA(Gln) in organisms which lack either or both of asparaginyl-tRNA or glutaminyl-tRNA synthetases. The reaction takes place in the presence of glutamine and ATP through an activated phospho-Asp-tRNA(Asn) or phospho-Glu-tRNA(Gln). The chain is Aspartyl/glutamyl-tRNA(Asn/Gln) amidotransferase subunit C from Mycolicibacterium smegmatis (strain ATCC 700084 / mc(2)155) (Mycobacterium smegmatis).